The primary structure comprises 281 residues: Acetylglutamate kinase (281 aa).

Substrate is bound by residues 64-65, R86, and N179; that span reads GG.

Belongs to the acetylglutamate kinase family. ArgB subfamily.

Its subcellular location is the cytoplasm. It carries out the reaction N-acetyl-L-glutamate + ATP = N-acetyl-L-glutamyl 5-phosphate + ADP. It participates in amino-acid biosynthesis; L-arginine biosynthesis; N(2)-acetyl-L-ornithine from L-glutamate: step 2/4. Functionally, catalyzes the ATP-dependent phosphorylation of N-acetyl-L-glutamate. In Campylobacter curvus (strain 525.92), this protein is Acetylglutamate kinase.